The sequence spans 520 residues: Cobyric acid synthase (520 aa).

The 195-residue stretch at Trp257–Phe451 folds into the GATase cobBQ-type domain. Cys338 functions as the Nucleophile in the catalytic mechanism. The active site involves His443.

This sequence belongs to the CobB/CobQ family. CobQ subfamily.

It participates in cofactor biosynthesis; adenosylcobalamin biosynthesis. Its function is as follows. Catalyzes amidations at positions B, D, E, and G on adenosylcobyrinic A,C-diamide. NH(2) groups are provided by glutamine, and one molecule of ATP is hydrogenolyzed for each amidation. In Nocardia farcinica (strain IFM 10152), this protein is Cobyric acid synthase.